The following is a 358-amino-acid chain: Dynein axonemal assembly factor 10 (358 aa).

6 WD repeats span residues 64–106, 116–155, 163–206, 208–250, 258–298, and 320–358; these read EKPK…TPVY, NCIDGVGGVGIGDGAPEIVTGSRDGTVKVWDPRQKDTPVA, EAKR…VRWE, NIKN…PTKG, AHKS…QRSR, and LSTQPISSLDWSPDKKGLCVCTSFDQTVRVLIVTKLNRL.

As to quaternary structure, interacts with PIH1D1; the interaction associates DNAAF10 with the R2TP complex. Interacts with several dynein axonemal assembly factors.

The protein resides in the dynein axonemal particle. Key assembly factor specifically required for the stability of axonemal dynein heavy chains in cytoplasm. The protein is Dynein axonemal assembly factor 10 (dnaaf10) of Xenopus laevis (African clawed frog).